The primary structure comprises 418 residues: Tyrosine--tRNA ligase (418 aa).

Tyrosine 38 provides a ligand contact to L-tyrosine. The 'HIGH' region signature appears at cysteine 43–serine 52. Tyrosine 175 and glutamine 179 together coordinate L-tyrosine. The 'KMSKS' region motif lies at lysine 235 to threonine 239. Residue lysine 238 coordinates ATP. Residues leucine 348–valine 413 form the S4 RNA-binding domain.

Belongs to the class-I aminoacyl-tRNA synthetase family. TyrS type 1 subfamily. Homodimer.

The protein resides in the cytoplasm. It carries out the reaction tRNA(Tyr) + L-tyrosine + ATP = L-tyrosyl-tRNA(Tyr) + AMP + diphosphate + H(+). In terms of biological role, catalyzes the attachment of tyrosine to tRNA(Tyr) in a two-step reaction: tyrosine is first activated by ATP to form Tyr-AMP and then transferred to the acceptor end of tRNA(Tyr). This Ehrlichia ruminantium (strain Gardel) protein is Tyrosine--tRNA ligase.